We begin with the raw amino-acid sequence, 303 residues long: Heme A synthase (303 aa).

Residues 1 to 8 (MFGKKNLK) lie on the Cytoplasmic side of the membrane. The chain crosses the membrane as a helical span at residues 9-29 (WLGVVATLMMTFVQLGGALVT). The Extracellular segment spans residues 30 to 67 (KTGSADGCGSSWPLCHGALIPEFFPIDTIIELSHRAVS). Cys-37 and Cys-44 form a disulfide bridge. Glu-60 is an active-site residue. Residue His-63 coordinates heme o. A helical transmembrane segment spans residues 68–88 (ALSLLMVLWLVITAWKHIGYI). The Cytoplasmic segment spans residues 89–93 (KEIKP). The chain crosses the membrane as a helical span at residues 94 to 114 (LSIISVGFLLLQALIGAAAVI). The Extracellular segment spans residues 115-125 (WQQNDYVLALH). His-125 is a binding site for heme o. A helical membrane pass occupies residues 126 to 146 (FGISLISFSSVFLITLIIFSI). Over 147–163 (DQKYEAAELYIKKPLRR) the chain is Cytoplasmic. The chain crosses the membrane as a helical span at residues 164–184 (LTWLMAIIIYCGVYTGALVRH). The Extracellular segment spans residues 185-215 (ADASLAYGGWPLPFHDLVPHSEQDWVQLTHR). His-214 contributes to the heme b binding site. The helical transmembrane segment at 216 to 236 (IMAFIVFTIIMITYIHAVKNY) threads the bilayer. Topologically, residues 237–244 (PNNRTVHY) are cytoplasmic. Residues 245–265 (GYTAAFILVILQVITGALSIM) form a helical membrane-spanning segment. Over 266–270 (TNVNL) the chain is Extracellular. A helical transmembrane segment spans residues 271–291 (IIALFHALFITYLFGMTTYFI). His-276 lines the heme b pocket. Residues 292-303 (MLMLRSVRSDKQ) are Cytoplasmic-facing.

This sequence belongs to the COX15/CtaA family. Type 1 subfamily. As to quaternary structure, interacts with CtaB. Requires heme b as cofactor.

The protein resides in the cell membrane. It catalyses the reaction Fe(II)-heme o + 2 A + H2O = Fe(II)-heme a + 2 AH2. Its pathway is porphyrin-containing compound metabolism; heme A biosynthesis; heme A from heme O: step 1/1. Its function is as follows. Catalyzes the conversion of heme O to heme A by two successive hydroxylations of the methyl group at C8. The first hydroxylation forms heme I, the second hydroxylation results in an unstable dihydroxymethyl group, which spontaneously dehydrates, resulting in the formyl group of heme A. The sequence is that of Heme A synthase from Staphylococcus aureus (strain bovine RF122 / ET3-1).